The primary structure comprises 432 residues: Gamma-glutamyl phosphate reductase (432 aa).

This sequence belongs to the gamma-glutamyl phosphate reductase family.

The protein resides in the cytoplasm. It carries out the reaction L-glutamate 5-semialdehyde + phosphate + NADP(+) = L-glutamyl 5-phosphate + NADPH + H(+). The protein operates within amino-acid biosynthesis; L-proline biosynthesis; L-glutamate 5-semialdehyde from L-glutamate: step 2/2. In terms of biological role, catalyzes the NADPH-dependent reduction of L-glutamate 5-phosphate into L-glutamate 5-semialdehyde and phosphate. The product spontaneously undergoes cyclization to form 1-pyrroline-5-carboxylate. This chain is Gamma-glutamyl phosphate reductase, found in Brachyspira hyodysenteriae (strain ATCC 49526 / WA1).